Reading from the N-terminus, the 228-residue chain is CD302 antigen (228 aa).

A signal peptide spans 1–20 (MPHAALSSLVLLSLATAIFA). Residues 21-165 (DCPSSIWVQF…YDKKYLSDNH (145 aa)) lie on the Extracellular side of the membrane. Positions 30-149 (FQGSCYTFLQ…CEMSSVTGTL (120 aa)) constitute a C-type lectin domain. N-linked (GlcNAc...) asparagine glycosylation occurs at N107. A disulfide bridge connects residues C125 and C140. Residues 166 to 186 (ILISTLVIASTVTLAVLGAVI) form a helical membrane-spanning segment. The Cytoplasmic portion of the chain corresponds to 187–228 (WFLYRRSARSGFTSFSPAPQSPYSDGCALVVSEEDEYSVQLD).

It is found in the membrane. Its subcellular location is the cell projection. It localises to the filopodium. The protein resides in the cytoplasm. The protein localises to the cell cortex. It is found in the microvillus. In terms of biological role, potential multifunctional C-type lectin receptor that may play roles in endocytosis and phagocytosis as well as in cell adhesion and migration. This chain is CD302 antigen (Cd302), found in Rattus norvegicus (Rat).